A 409-amino-acid chain; its full sequence is MHALRNFAGNGIANVFGCGIRRRLSYVLGIETSCDDTGIAIVDTTGRVIANVLESQQEFHTRYGGIIPPRAQDLHRARIESAYQRCMEAAQLKPDQLTAIAVTTRPGLPLSLLVGVRFARHLARRLQKPLLPVHHMEAHALQARMEHPEQIGYPFLCLLASGGHCQLVVANGPGRLTLLGQTLDDAPGEAFDKIGRRLRLHILPEYRLWNGGRAIEHAAQLASDPLAYEFPLPLAQQRNCNFSFAGIKNNSFRAIRARERAERTPPDGVISNYGDFCAGLLRSVSRHLMHRTQRAIEYCLLPHRQLFGDTPPTLVMSGGVANNDAIYANIEHLAAQYGCRSFRPSKRYCSDNGVMIAWHGVEQLLQDKEASTRYDYDSIDIQGSAGFAESHEEAVAAAAIKCKWIQPLV.

The transit peptide at 1-31 (MHALRNFAGNGIANVFGCGIRRRLSYVLGIE) directs the protein to the mitochondrion. A divalent metal cation-binding residues include His135 and His139. Residues 159 to 163 (LASGG), Asp192, Gly212, Glu216, 322 to 323 (NN), and Ser350 contribute to the substrate site. Asp351 provides a ligand contact to a divalent metal cation.

Belongs to the KAE1 / TsaD family. Homodimer. A divalent metal cation serves as cofactor.

It is found in the mitochondrion. It carries out the reaction L-threonylcarbamoyladenylate + adenosine(37) in tRNA = N(6)-L-threonylcarbamoyladenosine(37) in tRNA + AMP + H(+). In terms of biological role, required for the formation of a threonylcarbamoyl group on adenosine at position 37 (t(6)A37) in mitochondrial tRNAs that read codons beginning with adenine. Probably involved in the transfer of the threonylcarbamoyl moiety of threonylcarbamoyl-AMP (TC-AMP) to the N6 group of A37. Involved in mitochondrial genome maintenance. This chain is Probable tRNA N6-adenosine threonylcarbamoyltransferase, mitochondrial, found in Drosophila melanogaster (Fruit fly).